The primary structure comprises 171 residues: Putative phosphoesterase BPUM_1117 (171 aa).

His-34 acts as the Proton donor in catalysis. 2 consecutive short sequence motifs (HXTX) follow at residues 34-37 and 115-118; these read HLTL and HVTV. The active-site Proton acceptor is His-115.

The protein belongs to the 2H phosphoesterase superfamily. YjcG family.

The chain is Putative phosphoesterase BPUM_1117 from Bacillus pumilus (strain SAFR-032).